A 325-amino-acid chain; its full sequence is uncharacterized protein (325 aa).

This is an uncharacterized protein from Escherichia coli (Bacteriophage T4).